The sequence spans 525 residues: GMP synthase [glutamine-hydrolyzing] (525 aa).

In terms of domain architecture, Glutamine amidotransferase type-1 spans R9–L207. C86 (nucleophile) is an active-site residue. Residues H181 and E183 contribute to the active site. The GMPS ATP-PPase domain maps to W208–R400. An ATP-binding site is contributed by S235–S241.

Homodimer.

The enzyme catalyses XMP + L-glutamine + ATP + H2O = GMP + L-glutamate + AMP + diphosphate + 2 H(+). It participates in purine metabolism; GMP biosynthesis; GMP from XMP (L-Gln route): step 1/1. Functionally, catalyzes the synthesis of GMP from XMP. This Pseudomonas putida (strain GB-1) protein is GMP synthase [glutamine-hydrolyzing].